The following is a 567-amino-acid chain: DNA ligase B (567 aa).

The N6-AMP-lysine intermediate role is filled by lysine 132.

Belongs to the NAD-dependent DNA ligase family. LigB subfamily.

It catalyses the reaction NAD(+) + (deoxyribonucleotide)n-3'-hydroxyl + 5'-phospho-(deoxyribonucleotide)m = (deoxyribonucleotide)n+m + AMP + beta-nicotinamide D-nucleotide.. In terms of biological role, catalyzes the formation of phosphodiester linkages between 5'-phosphoryl and 3'-hydroxyl groups in double-stranded DNA using NAD as a coenzyme and as the energy source for the reaction. This is DNA ligase B from Yersinia pestis.